Here is a 439-residue protein sequence, read N- to C-terminus: Eukaryotic translation initiation factor 2 subunit gamma (439 aa).

The tr-type G domain occupies 11-215; that stretch reads QATLNIGTIG…FIVNYIPEPV (205 aa). The interval 20–27 is G1; sequence GHVAHGKS. Residue 23-28 coordinates GTP; it reads AHGKST. The interval 48–52 is G2; sequence NITIK. The interval 103-106 is G3; that stretch reads DCPG. GTP-binding positions include 159–162 and 193–195; these read NKID and AAQ. Positions 159-162 are G4; that stretch reads NKID. Residues 193-195 form a G5 region; that stretch reads AAQ. Residues 415-427 are interacts with CDC123; the sequence is GEIKDGTCIEPEY.

The protein belongs to the TRAFAC class translation factor GTPase superfamily. Classic translation factor GTPase family. EIF2G subfamily. In terms of assembly, eukaryotic translation initiation factor 2 eIF2 is a heterotrimeric complex composed of an alpha, a beta and a gamma subunit. The factors eIF-1, eIF-2, eIF-3, TIF5/eIF-5 and methionyl-tRNAi form a multifactor complex (MFC) that may bind to the 40S ribosome.

The protein resides in the cytoplasm. It is found in the cytosol. It carries out the reaction GTP + H2O = GDP + phosphate + H(+). Its function is as follows. As a subunit of eukaryotic initiation factor 2 eIF2, involved in the early steps of protein synthesis. In the presence of GTP, eIF-2 forms a ternary complex with initiator tRNA Met-tRNAi and then recruits the 40S ribosomal complex and initiation factors eIF-1, eIF-1A and eIF-3 to form the 43S pre-initiation complex (43S PIC), a step that determines the rate of protein translation. The 43S PIC binds to mRNA and scans downstream to the initiation codon, where it forms a 48S initiation complex by codon-anticodon base pairing. This leads to the displacement of eIF-1 to allow GTPase-activating protein (GAP) eIF-5-mediated hydrolysis of eIF2-bound GTP. Hydrolysis of GTP and release of Pi, which makes GTP hydrolysis irreversible, causes the release of the eIF-2-GDP binary complex from the 40S subunit, an event that is essential for the subsequent joining of the 60S ribosomal subunit to form an elongation-competent 80S ribosome. In order for eIF-2 to recycle and catalyze another round of initiation, the GDP bound to eIF-2 must be exchanged with GTP by way of a reaction catalyzed by GDP-GTP exchange factor (GEF) eIF-2B. The chain is Eukaryotic translation initiation factor 2 subunit gamma from Encephalitozoon cuniculi (strain GB-M1) (Microsporidian parasite).